We begin with the raw amino-acid sequence, 1373 residues long: MYNPYQQQQAGFAPQQTGFAYANQPSQQPQQSQSQLANQATGFYQPQLQQQTLFASSQFQPQTSFGTVASIQPQQTGYIQTQPTGFASQGIAAPTVVENSSLKIPSIRLSFITAEDQKKFEHLFRTAVPKGEQAINGDSASTILLRSGLTPVTLAEIWSLSDTNKSGSLLFPEFALSLHLCSMAKRGEPLPGYLPEKWANEVKSFVDAISFSVPEDPDKILANTPFASFSGTNTQDDWLSNLNNQTNSAAATSNFGAPGFTSFQPQATGYGGGLPLASQRTGPGLASIGTTSFSAPTAPTAPTAAPLASQRTGGGTLIPLQPQQTAGLIPAQKTGPLNGFPQQLQQQSTGYQPQLQQLQQQSTGYQPQLQQLQQQSTGYQSQLLAQRTGPLQSQSTGFQPAPLQSQPTGRPGEWGFVHTPTGGIPGLNAMQQHFLPNADLPTNNLQNQMGGDLKSNVTWAITKQEKSIYDGIFQAWDTTRRGYIDGDVALNVFSKSGLSRPDLESIWTLADTSDRGKLNKDEFSVAMHLVYRRLNGLDIPLRLPPELIPPSNKYLQDSMDTMKNSLRGGVNNKSYSGGKQTKSDGTRFKNDDDDFGYVSNARHRRRSTATDNGPKSIKSSSDSDLSVEDLKKLIREKRILIDALDAEDQDAVLNKKKESQHNIDIIEKLKSQIKDVQASLNSKGLDAPIEEKKQLLGVLNSLTRDKVPNLISNIYKVHNDIAKAKVELLKAKLLKQNPSWNPDSNESEIQGTGPNGEVTELDRRKFQSKQLLKQRMAALTGRTSNSGSNADLDLQLKQESEKAKSESINQSNIVKDIESSIKELEDGCATHLQTSATEESGSEKWERGQGISAEVAAFVRELNSFAESQRRNIAAQNSSSLESSTVSSTAEVSQPASSVSSQPVSASSSYRTPEERAAYIKAQAEKKMNERLAKLGISRSRNATIAEPNPPTKVDAQPATPPVAPAVVESAAVSPPVKKQPPPVSPRSVRVEQQKPAPPVDSSSDDDDEEYAAILKQKQQLEAKEKERKLAKQKQKQARLDKIKKEMEEIKRRQAEAEAEEDSDEEPSSVPTYTVSNSAPKAVAKTAEDPVVEPVIAKSVEQEAVPDQVAAPKAHESNPFSKVQATPTGNSTNPFFKPTTKESTIDPKKAAAQRASQRGLSKNDGWSDSDDNESEDDQPNRAGAAQLASLLFGGMAPKSKESTPQQTPQQEKTESEALSKSVSTLKDPSGSDDEFSTPPPDAPSQQTVAPPIPTEVPPIPTGAPPIPTGAPPIPTEAPPIPVGGPSSFAPPPPPPPPPPPGPPPIPNAPFGAPPPPPPPPGPPPPVSNGVTAPPVTADIGALLGQIQGGKSLKKVDASQQKISSNDLAGTVLS.

The EH 1 domain maps to 116–205 (DQKKFEHLFR…EKWANEVKSF (90 aa)). An EF-hand 1 domain is found at 149–184 (LTPVTLAEIWSLSDTNKSGSLLFPEFALSLHLCSMA). Disordered stretches follow at residues 271-362 (GGGL…QQQS) and 385-409 (AQRT…QPTG). 2 stretches are compositionally biased toward low complexity: residues 290 to 309 (TTSF…PLAS) and 341 to 362 (PQQL…QQQS). Over residues 389–408 (GPLQSQSTGFQPAPLQSQPT) the composition is skewed to polar residues. One can recognise an EH 2 domain in the interval 465–554 (EKSIYDGIFQ…PELIPPSNKY (90 aa)). An EF-hand 2 domain is found at 498–533 (LSRPDLESIWTLADTSDRGKLNKDEFSVAMHLVYRR). Disordered regions lie at residues 562–622 (MKNS…SSSD), 739–758 (SWNP…NGEV), 876–914 (QNSS…RTPE), 931–1089 (RLAK…TAED), 1103–1335 (EAVP…APPV), and 1349–1373 (GKSL…TVLS). Positions 571-580 (NNKSYSGGKQ) are enriched in polar residues. A compositionally biased stretch (basic and acidic residues) spans 581 to 590 (TKSDGTRFKN). Residues 739–752 (SWNPDSNESEIQGT) are compositionally biased toward polar residues. 2 stretches are compositionally biased toward low complexity: residues 878 to 909 (SSSL…ASSS) and 965 to 977 (PAVV…SPPV). Residues 1007-1066 (DDEEYAAILKQKQQLEAKEKERKLAKQKQKQARLDKIKKEMEEIKRRQAEAEAEEDSDEE) adopt a coiled-coil conformation. Composition is skewed to basic and acidic residues over residues 1019–1030 (QQLEAKEKERKL) and 1038–1056 (ARLD…RQAE). Over residues 1057–1067 (AEAEEDSDEEP) the composition is skewed to acidic residues. Composition is skewed to polar residues over residues 1070 to 1079 (VPTYTVSNSA) and 1118 to 1134 (NPFS…STNP). Positions 1139-1149 (TTKESTIDPKK) are enriched in basic and acidic residues. Polar residues predominate over residues 1154–1166 (RASQRGLSKNDGW). The segment covering 1167-1177 (SDSDDNESEDD) has biased composition (acidic residues). Positions 1250–1326 (PPIPTEVPPI…PPPPGPPPPV (77 aa)) are enriched in pro residues. One can recognise a WH2 domain in the interval 1338-1355 (DIGALLGQIQGGKSLKKV). A compositionally biased stretch (polar residues) spans 1357–1373 (ASQQKISSNDLAGTVLS).

This sequence belongs to the PAN1 family. In terms of assembly, component of the PAN1 actin cytoskeleton-regulatory complex.

The protein localises to the cell membrane. The protein resides in the endosome membrane. Its subcellular location is the cytoplasm. It localises to the cytoskeleton. It is found in the actin patch. In terms of biological role, component of the PAN1 actin cytoskeleton-regulatory complex required for the internalization of endosomes during actin-coupled endocytosis. The complex links the site of endocytosis to the cell membrane-associated actin cytoskeleton. Mediates uptake of external molecules and vacuolar degradation of plasma membrane proteins. Plays a role in the proper organization of the cell membrane-associated actin cytoskeleton and promotes its destabilization. This chain is Actin cytoskeleton-regulatory complex protein PAN1 (PAN1), found in Scheffersomyces stipitis (strain ATCC 58785 / CBS 6054 / NBRC 10063 / NRRL Y-11545) (Yeast).